The primary structure comprises 291 residues: Glycine--tRNA ligase alpha subunit (291 aa).

This sequence belongs to the class-II aminoacyl-tRNA synthetase family. As to quaternary structure, tetramer of two alpha and two beta subunits.

It is found in the cytoplasm. The enzyme catalyses tRNA(Gly) + glycine + ATP = glycyl-tRNA(Gly) + AMP + diphosphate. In Trichlorobacter lovleyi (strain ATCC BAA-1151 / DSM 17278 / SZ) (Geobacter lovleyi), this protein is Glycine--tRNA ligase alpha subunit.